The chain runs to 467 residues: Cysteine--tRNA ligase (467 aa).

Cys-27 serves as a coordination point for Zn(2+). The short motif at 29 to 39 (ATVQGLPHIGH) is the 'HIGH' region element. The Zn(2+) site is built by Cys-209, His-234, and Glu-238. The 'KMSKS' region motif lies at 265 to 269 (KMSKS). ATP is bound at residue Lys-268.

It belongs to the class-I aminoacyl-tRNA synthetase family. As to quaternary structure, monomer. It depends on Zn(2+) as a cofactor.

Its subcellular location is the cytoplasm. It catalyses the reaction tRNA(Cys) + L-cysteine + ATP = L-cysteinyl-tRNA(Cys) + AMP + diphosphate. This chain is Cysteine--tRNA ligase, found in Mycolicibacterium gilvum (strain PYR-GCK) (Mycobacterium gilvum (strain PYR-GCK)).